We begin with the raw amino-acid sequence, 333 residues long: Adenosine deaminase (333 aa).

Histidine 12 and histidine 14 together coordinate Zn(2+). Substrate is bound by residues histidine 14, aspartate 16, and glycine 170. Histidine 197 lines the Zn(2+) pocket. Glutamate 200 (proton donor) is an active-site residue. Position 278 (aspartate 278) interacts with Zn(2+). Substrate is bound at residue aspartate 279.

The protein belongs to the metallo-dependent hydrolases superfamily. Adenosine and AMP deaminases family. Adenosine deaminase subfamily. The cofactor is Zn(2+).

The catalysed reaction is adenosine + H2O + H(+) = inosine + NH4(+). It catalyses the reaction 2'-deoxyadenosine + H2O + H(+) = 2'-deoxyinosine + NH4(+). In terms of biological role, catalyzes the hydrolytic deamination of adenosine and 2-deoxyadenosine. This is Adenosine deaminase from Salmonella typhi.